We begin with the raw amino-acid sequence, 462 residues long: uncharacterized protein (462 aa).

An HTH gntR-type domain is found at 22-90 (KPIYKALAGQ…VGSGTFVSYD (69 aa)). The H-T-H motif DNA-binding region spans 50-69 (QRELADYLDLNVSTISKAFK). Lys308 is subject to N6-(pyridoxal phosphate)lysine.

It in the C-terminal section; belongs to the class-I pyridoxal-phosphate-dependent aminotransferase family. Pyridoxal 5'-phosphate serves as cofactor.

This is an uncharacterized protein from Bacillus subtilis (strain 168).